We begin with the raw amino-acid sequence, 409 residues long: L-cysteine:1D-myo-inositol 2-amino-2-deoxy-alpha-D-glucopyranoside ligase (409 aa).

Cys-43 provides a ligand contact to Zn(2+). L-cysteinyl-5'-AMP is bound by residues 43-46 (CGIT), Thr-58, and 81-83 (NVT). Positions 45–55 (ITPYDATHMGH) match the 'HIGH' region motif. A 'ERGGDP' region motif is present at residues 183–188 (ERGGDP). Trp-224 serves as a coordination point for L-cysteinyl-5'-AMP. Cys-228 serves as a coordination point for Zn(2+). An L-cysteinyl-5'-AMP-binding site is contributed by 246–248 (GSD). Residue His-253 participates in Zn(2+) binding. L-cysteinyl-5'-AMP is bound at residue Val-280. The short motif at 286 to 290 (KMSKS) is the 'KMSKS' region element.

This sequence belongs to the class-I aminoacyl-tRNA synthetase family. MshC subfamily. Monomer. The cofactor is Zn(2+).

The enzyme catalyses 1D-myo-inositol 2-amino-2-deoxy-alpha-D-glucopyranoside + L-cysteine + ATP = 1D-myo-inositol 2-(L-cysteinylamino)-2-deoxy-alpha-D-glucopyranoside + AMP + diphosphate + H(+). In terms of biological role, catalyzes the ATP-dependent condensation of GlcN-Ins and L-cysteine to form L-Cys-GlcN-Ins. The polypeptide is L-cysteine:1D-myo-inositol 2-amino-2-deoxy-alpha-D-glucopyranoside ligase (mshC) (Streptomyces avermitilis (strain ATCC 31267 / DSM 46492 / JCM 5070 / NBRC 14893 / NCIMB 12804 / NRRL 8165 / MA-4680)).